The primary structure comprises 248 residues: Ubiquinone biosynthesis O-methyltransferase (248 aa).

S-adenosyl-L-methionine-binding residues include Arg-41, Gly-72, Asp-93, and Met-136.

This sequence belongs to the methyltransferase superfamily. UbiG/COQ3 family.

It catalyses the reaction a 3-demethylubiquinol + S-adenosyl-L-methionine = a ubiquinol + S-adenosyl-L-homocysteine + H(+). It carries out the reaction a 3-(all-trans-polyprenyl)benzene-1,2-diol + S-adenosyl-L-methionine = a 2-methoxy-6-(all-trans-polyprenyl)phenol + S-adenosyl-L-homocysteine + H(+). Its pathway is cofactor biosynthesis; ubiquinone biosynthesis. Its function is as follows. O-methyltransferase that catalyzes the 2 O-methylation steps in the ubiquinone biosynthetic pathway. This Sinorhizobium fredii (strain NBRC 101917 / NGR234) protein is Ubiquinone biosynthesis O-methyltransferase.